The chain runs to 413 residues: MDFTNLKNTDPELLDMIKKEEERQEYNIELIASENFTSLSVMEAMGSLLTNKYAEGYPHKRYYGGCEFVDEVEDLARERLKKLFVAEHANVQPHSGSQANMAVYMSVLQTGDTILGMDLSHGGHLTHGSPVNFSGKLYNFISYGVDKETETIDYDQLKKIALENRPKMIVSGASAYPRIIDFEKIREICDEIDAYMMVDMAHIAGLVATGIHPSPVPYADFVTTTTHKTLRGPRGGAILCKEKYAKAVDKAIFPGIQGGPLMHTIAAKAVCFGEALREDYKEYMQQVVKNTKVLGEELKNYGFRLISGGTDNHLLLIDLTNKNITGKDAEKLLDSVGITVNKNTIPFETLSPFITSGIRIGTPAVTTRGFKEEEMKKIAYFMNYSIEHREENLSQIKEQIKEICKKYPLHQNA.

(6S)-5,6,7,8-tetrahydrofolate is bound by residues Leu-119 and 123–125; that span reads GHL. Lys-228 carries the post-translational modification N6-(pyridoxal phosphate)lysine. 351 to 353 is a binding site for (6S)-5,6,7,8-tetrahydrofolate; sequence SPF.

This sequence belongs to the SHMT family. In terms of assembly, homodimer. Pyridoxal 5'-phosphate serves as cofactor.

It localises to the cytoplasm. It catalyses the reaction (6R)-5,10-methylene-5,6,7,8-tetrahydrofolate + glycine + H2O = (6S)-5,6,7,8-tetrahydrofolate + L-serine. It functions in the pathway one-carbon metabolism; tetrahydrofolate interconversion. Its pathway is amino-acid biosynthesis; glycine biosynthesis; glycine from L-serine: step 1/1. Its function is as follows. Catalyzes the reversible interconversion of serine and glycine with tetrahydrofolate (THF) serving as the one-carbon carrier. This reaction serves as the major source of one-carbon groups required for the biosynthesis of purines, thymidylate, methionine, and other important biomolecules. Also exhibits THF-independent aldolase activity toward beta-hydroxyamino acids, producing glycine and aldehydes, via a retro-aldol mechanism. The polypeptide is Serine hydroxymethyltransferase (Clostridium botulinum (strain Okra / Type B1)).